A 387-amino-acid polypeptide reads, in one-letter code: Alpha-2B adrenergic receptor (387 aa).

Residues 1 to 25 (AIAAVITFLILFTIFGNALVILAVL) form a helical membrane-spanning segment. Topologically, residues 26-36 (TSRSLRAPQNL) are cytoplasmic. The chain crosses the membrane as a helical span at residues 37–62 (FLVSLAAADILVATLIIPFSLANELL). The Extracellular portion of the chain corresponds to 63–72 (GYWYFRHTWC). Cys-72 and Cys-151 form a disulfide bridge. The helical transmembrane segment at 73–95 (XVYLALDVLFCTSSIVHLCAISL) threads the bilayer. The Cytoplasmic portion of the chain corresponds to 96–117 (DRYWAVSRALEYNSKRTPRRIK). Residues 118 to 140 (CIILTVWLIAAAISLPPLIYKGD) form a helical membrane-spanning segment. Topologically, residues 141–156 (QDPQPRGRPQCKLNQE) are extracellular. A helical transmembrane segment spans residues 157–180 (AWYILSSSIGSFFVPCLIMILVYL). At 181–351 (RIYLIAKRSS…LTREKRFTFV (171 aa)) the chain is on the cytoplasmic side. A disordered region spans residues 193-303 (RKPRAKGXPR…VPASPALACS (111 aa)). Acidic residues predominate over residues 279-290 (PEEEAEEEEECG). A helical membrane pass occupies residues 352 to 375 (LAVVIGVFVLCWFPFFFSYSLGAI). Residues 376-384 (CPQHCKVPH) lie on the Extracellular side of the membrane. A helical membrane pass occupies residues 385-387 (GLF).

This sequence belongs to the G-protein coupled receptor 1 family. Adrenergic receptor subfamily. ADRA2B sub-subfamily. Interacts with RAB26. Interacts with PPP1R9B. Interacts with GGA1, GGA2 and GGA3.

Its subcellular location is the cell membrane. Alpha-2 adrenergic receptors mediate the catecholamine-induced inhibition of adenylate cyclase through the action of G proteins. The sequence is that of Alpha-2B adrenergic receptor (ADRA2B) from Macroscelides proboscideus (Short-eared elephant shrew).